The sequence spans 320 residues: MEVKEVVVIVKWSGKEYPVDLTDQDTVEVLRHEIFRKTQVRPERQKLLNLKYKGKTAADNVKISALELKPNFKLMMVGSTEADIEDACSLPDNIGEVVDDFDDADEREESVEHSAVYLAKVQRRVRDYKIKELAPPREGKKLLVLDIDYTLFDHRSPAETGTELMRPYLHEFLTSAYEDYDIVIWSATSMRWIEEKMRLLGVASNDNYKVMFYLDSTAMISVHVPERGVVDVKPLGVIWALYKQYNSSNTIMFDDIRRNFLMNPKSGLKIRPFRQAHLNRGTDTELLKLSDYLRKIAHHCPDFNSLNHRKWEHYHPKKNS.

Residues 6 to 77 (VVVIVKWSGK…LKPNFKLMMV (72 aa)) form the Ubiquitin-like domain. Residues 136 to 296 (PREGKKLLVL…LKLSDYLRKI (161 aa)) enclose the FCP1 homology domain. Residues Asp146, Asp148, and Asp255 each coordinate Mg(2+).

Mg(2+) is required as a cofactor.

It localises to the nucleus. It catalyses the reaction O-phospho-L-seryl-[protein] + H2O = L-seryl-[protein] + phosphate. The catalysed reaction is O-phospho-L-threonyl-[protein] + H2O = L-threonyl-[protein] + phosphate. Dephosphorylates 26S nuclear proteasomes, thereby decreasing their proteolytic activity. Recruited to the 19S regulatory particle of the 26S proteasome where it dephosphorylates 19S component Rpt1 which impairs Rpt1 ATPase activity and disrupts 26S proteasome assembly. The polypeptide is Ubiquitin-like domain-containing CTD phosphatase 1 (Drosophila melanogaster (Fruit fly)).